The sequence spans 142 residues: Chorion class A protein Ld19 (142 aa).

The first 18 residues, 1–18 (MNSFALLLVCIQACLVQS), serve as a signal peptide directing secretion.

It belongs to the chorion protein family.

Its function is as follows. This protein is one of many from the eggshell of the gypsy moth. This is Chorion class A protein Ld19 from Lymantria dispar (Gypsy moth).